Here is a 418-residue protein sequence, read N- to C-terminus: Equilibrative nucleotide transporter 4 (418 aa).

11 helical membrane-spanning segments follow: residues 20-40, 54-74, 85-105, 108-128, 147-169, 186-206, 264-284, 291-311, 326-346, 353-373, and 392-412; these read MVVCCILGIGSLFSWNSMLTI, SRVFTLIYQPIALGTIMILAY, ILTGYILFTISTFLLIVLDLT, GHGGIGHYIVLCTIVASFGLA, LIQSYMAGSGMAGALTSVLRLIT, IFLAISTFIELLCVILYAYVF, HAVNLFLIYVLTLSIFPGFLY, GLGDWYALILVATYNFWDLFG, KALTIAVLTRYFLVPAFYFTA, WMIMLVSILGLTTGHLTVCIM, and LVVFILGGAVVGISLGWLWLI.

This sequence belongs to the SLC29A/ENT transporter (TC 2.A.57) family. Expressed in leaves and at lowe levels in stems and flowers.

The protein resides in the cell membrane. Nucleoside transporter that can mediate uptake of adenosine, uridine, guanosine or cytidine when expressed in a heterologous system (yeast). This chain is Equilibrative nucleotide transporter 4 (ENT4), found in Arabidopsis thaliana (Mouse-ear cress).